The sequence spans 421 residues: Glutamyl-tRNA reductase (421 aa).

Residues 49–52, Ser-109, 114–116, and Gln-120 each bind substrate; these read TCNR and EPQ. Cys-50 acts as the Nucleophile in catalysis. An NADP(+)-binding site is contributed by 189 to 194; it reads GAGKMS.

The protein belongs to the glutamyl-tRNA reductase family. In terms of assembly, homodimer.

The enzyme catalyses (S)-4-amino-5-oxopentanoate + tRNA(Glu) + NADP(+) = L-glutamyl-tRNA(Glu) + NADPH + H(+). It functions in the pathway porphyrin-containing compound metabolism; protoporphyrin-IX biosynthesis; 5-aminolevulinate from L-glutamyl-tRNA(Glu): step 1/2. Its function is as follows. Catalyzes the NADPH-dependent reduction of glutamyl-tRNA(Glu) to glutamate 1-semialdehyde (GSA). The chain is Glutamyl-tRNA reductase from Solibacter usitatus (strain Ellin6076).